The following is a 258-amino-acid chain: Ureidoacrylate amidohydrolase RutB (258 aa).

Residues 1 to 23 form a disordered region; it reads MDRPTTYPMDQPAGFRDAQGRHG. The Proton acceptor role is filled by D47. Residue K156 is part of the active site. C189 acts as the Nucleophile in catalysis.

It belongs to the isochorismatase family. RutB subfamily.

It carries out the reaction (Z)-3-ureidoacrylate + H2O + H(+) = (Z)-3-aminoacrylate + NH4(+) + CO2. The catalysed reaction is (Z)-3-ureidoacrylate + H2O = (Z)-3-aminoacrylate + carbamate + H(+). The enzyme catalyses (Z)-2-methylureidoacrylate + H2O + H(+) = (Z)-2-methylaminoacrylate + NH4(+) + CO2. Functionally, hydrolyzes ureidoacrylate to form aminoacrylate and carbamate. The carbamate hydrolyzes spontaneously, thereby releasing one of the nitrogen atoms of the pyrimidine ring as ammonia and one of its carbon atoms as CO2. This chain is Ureidoacrylate amidohydrolase RutB, found in Methylobacterium radiotolerans (strain ATCC 27329 / DSM 1819 / JCM 2831 / NBRC 15690 / NCIMB 10815 / 0-1).